The chain runs to 336 residues: Ketol-acid reductoisomerase (NADP(+)) (336 aa).

The region spanning Met-1–Thr-182 is the KARI N-terminal Rossmann domain. NADP(+) is bound by residues Phe-25 to Gln-28, Arg-48, Ser-51, Ser-53, and Asp-83 to Gln-86. The active site involves His-108. Position 134 (Gly-134) interacts with NADP(+). The region spanning Thr-183–Leu-328 is the KARI C-terminal knotted domain. Asp-191, Glu-195, Glu-227, and Glu-231 together coordinate Mg(2+). Ser-252 contacts substrate.

This sequence belongs to the ketol-acid reductoisomerase family. Requires Mg(2+) as cofactor.

The enzyme catalyses (2R)-2,3-dihydroxy-3-methylbutanoate + NADP(+) = (2S)-2-acetolactate + NADPH + H(+). It catalyses the reaction (2R,3R)-2,3-dihydroxy-3-methylpentanoate + NADP(+) = (S)-2-ethyl-2-hydroxy-3-oxobutanoate + NADPH + H(+). The protein operates within amino-acid biosynthesis; L-isoleucine biosynthesis; L-isoleucine from 2-oxobutanoate: step 2/4. Its pathway is amino-acid biosynthesis; L-valine biosynthesis; L-valine from pyruvate: step 2/4. Functionally, involved in the biosynthesis of branched-chain amino acids (BCAA). Catalyzes an alkyl-migration followed by a ketol-acid reduction of (S)-2-acetolactate (S2AL) to yield (R)-2,3-dihydroxy-isovalerate. In the isomerase reaction, S2AL is rearranged via a Mg-dependent methyl migration to produce 3-hydroxy-3-methyl-2-ketobutyrate (HMKB). In the reductase reaction, this 2-ketoacid undergoes a metal-dependent reduction by NADPH to yield (R)-2,3-dihydroxy-isovalerate. This is Ketol-acid reductoisomerase (NADP(+)) from Thermotoga neapolitana (strain ATCC 49049 / DSM 4359 / NBRC 107923 / NS-E).